The chain runs to 232 residues: 5'-methylthioadenosine/S-adenosylhomocysteine nucleosidase (232 aa).

The active-site Proton acceptor is the Glu12. Substrate contacts are provided by residues Gly78, Ile152, and 173 to 174 (ME). Residue Asp197 is the Proton donor of the active site.

It belongs to the PNP/UDP phosphorylase family. MtnN subfamily. Homodimer.

The catalysed reaction is S-adenosyl-L-homocysteine + H2O = S-(5-deoxy-D-ribos-5-yl)-L-homocysteine + adenine. The enzyme catalyses S-methyl-5'-thioadenosine + H2O = 5-(methylsulfanyl)-D-ribose + adenine. It carries out the reaction 5'-deoxyadenosine + H2O = 5-deoxy-D-ribose + adenine. Its pathway is amino-acid biosynthesis; L-methionine biosynthesis via salvage pathway; S-methyl-5-thio-alpha-D-ribose 1-phosphate from S-methyl-5'-thioadenosine (hydrolase route): step 1/2. Its function is as follows. Catalyzes the irreversible cleavage of the glycosidic bond in both 5'-methylthioadenosine (MTA) and S-adenosylhomocysteine (SAH/AdoHcy) to adenine and the corresponding thioribose, 5'-methylthioribose and S-ribosylhomocysteine, respectively. Also cleaves 5'-deoxyadenosine, a toxic by-product of radical S-adenosylmethionine (SAM) enzymes, into 5-deoxyribose and adenine. Thus, is required for in vivo function of the radical SAM enzymes biotin synthase and lipoic acid synthase, that are inhibited by 5'-deoxyadenosine accumulation. The sequence is that of 5'-methylthioadenosine/S-adenosylhomocysteine nucleosidase from Escherichia coli O9:H4 (strain HS).